The chain runs to 130 residues: Small ribosomal subunit protein uS11 (130 aa).

This sequence belongs to the universal ribosomal protein uS11 family. As to quaternary structure, part of the 30S ribosomal subunit.

Located on the platform of the 30S subunit. The chain is Small ribosomal subunit protein uS11 from Nanoarchaeum equitans (strain Kin4-M).